Here is a 373-residue protein sequence, read N- to C-terminus: Chaperone protein DnaJ (373 aa).

Residues 4 to 68 form the J domain; it reads NYYQILGVSK…QKRAAYDRLG (65 aa). The segment at 136-214 adopts a CR-type zinc-finger fold; that stretch reads GIEKNISFSS…CHGMGRYHKQ (79 aa). Cys149, Cys152, Cys166, Cys169, Cys188, Cys191, Cys202, and Cys205 together coordinate Zn(2+). 4 CXXCXGXG motif repeats span residues 149-156, 166-173, 188-195, and 202-209; these read CDTCHGSG, CDACSGVG, CHKCQGNG, and CKKCHGMG.

The protein belongs to the DnaJ family. Homodimer. Requires Zn(2+) as cofactor.

It localises to the cytoplasm. In terms of biological role, participates actively in the response to hyperosmotic and heat shock by preventing the aggregation of stress-denatured proteins and by disaggregating proteins, also in an autonomous, DnaK-independent fashion. Unfolded proteins bind initially to DnaJ; upon interaction with the DnaJ-bound protein, DnaK hydrolyzes its bound ATP, resulting in the formation of a stable complex. GrpE releases ADP from DnaK; ATP binding to DnaK triggers the release of the substrate protein, thus completing the reaction cycle. Several rounds of ATP-dependent interactions between DnaJ, DnaK and GrpE are required for fully efficient folding. Also involved, together with DnaK and GrpE, in the DNA replication of plasmids through activation of initiation proteins. The chain is Chaperone protein DnaJ from Rickettsia africae (strain ESF-5).